A 388-amino-acid chain; its full sequence is MDAQLTYTMGLLEQGYLSARVCSMGNSTSRLYSALAKTLSSSAAVSQELLEASQHDQSEPLDPKELLDECQVALQDRPARLHRDFFSLRSESSSQQPRTFRVMQWNILAQALGEGKDNFIMCPMEALKWEERKYLILEEILMYQPDVLCLQEVDHYFDTFQPILSRLGYQCTFLAKPWSPCLDVEHNNGPDGCALFFLQDRFQLVNSAKIRLSARTLKTNQVAIAETLQCCETGRQLCFAVTHLKARTGWERFRLAQGSDLLDNLESITQGATVPLIICGDFNADPTEEVYKRFASSSLNLNSAYKLLSEDGESEPPYTTWKIRTTGESCHTLDYIWYSQHALRVNAALGLPTEEQIGPNRLPSFNYPSDHLSLVCDFSFNEDPARLL.

Glutamate 152 is a binding site for Mg(2+). Substrate-binding positions include glutamate 152, 176-178 (KPW), asparagine 220, 243-246 (HLKA), 281-283 (DFN), and histidine 371.

This sequence belongs to the CCR4/nocturin family. The cofactor is Mg(2+). Expressed only in the photoreceptors of the retina. Expression is controlled by the retinal circadian clock.

It is found in the cytoplasm. The protein resides in the nucleus. The protein localises to the perinuclear region. Its subcellular location is the mitochondrion. It carries out the reaction NADP(+) + H2O = phosphate + NAD(+). The catalysed reaction is NADPH + H2O = phosphate + NADH. Functionally, phosphatase which catalyzes the conversion of NADP(+) to NAD(+) and of NADPH to NADH. Shows a small preference for NADPH over NADP(+). Component of the circadian clock or downstream effector of clock function. Exhibits a high amplitude circadian rhythm with maximal levels in early evening. In constant darkness or constant light, the amplitude of the rhythm decreases. The polypeptide is Nocturnin (Xenopus laevis (African clawed frog)).